The primary structure comprises 568 residues: Urease subunit alpha (568 aa).

A Urease domain is found at 129-568; that stretch reads GAIDSHIHFI…LPMAQRYFLF (440 aa). 3 residues coordinate Ni(2+): H134, H136, and K217. K217 carries the N6-carboxylysine modification. H219 is a binding site for substrate. The Ni(2+) site is built by H246 and H272. Residue H320 is the Proton donor of the active site. Position 360 (D360) interacts with Ni(2+).

It belongs to the metallo-dependent hydrolases superfamily. Urease alpha subunit family. As to quaternary structure, heterotrimer of UreA (gamma), UreB (beta) and UreC (alpha) subunits. Three heterotrimers associate to form the active enzyme. Requires Ni cation as cofactor. Carboxylation allows a single lysine to coordinate two nickel ions.

Its subcellular location is the cytoplasm. It catalyses the reaction urea + 2 H2O + H(+) = hydrogencarbonate + 2 NH4(+). Its pathway is nitrogen metabolism; urea degradation; CO(2) and NH(3) from urea (urease route): step 1/1. The chain is Urease subunit alpha from Saccharophagus degradans (strain 2-40 / ATCC 43961 / DSM 17024).